We begin with the raw amino-acid sequence, 370 residues long: High affinity iron permease ftrA (370 aa).

A run of 7 helical transmembrane segments spans residues V5–V25, V52–G72, L88–L108, A148–I168, A179–Y199, S206–F226, and Y293–M313. Positions R335–V370 are disordered. Polar residues predominate over residues T351–S360.

Belongs to the oxidase-dependent Fe transporter (OFeT) (TC 9.A.10.1) family.

It is found in the cell membrane. In terms of biological role, high affinity iron permease; part of the reductive iron assimilatory system (RIA), a siderophore-independent high affinity iron uptake mechanism. The protein is High affinity iron permease ftrA of Aspergillus fumigatus (strain ATCC MYA-4609 / CBS 101355 / FGSC A1100 / Af293) (Neosartorya fumigata).